The following is a 222-amino-acid chain: Phosphoglycolate phosphatase (222 aa).

The Nucleophile role is filled by aspartate 8. Aspartate 8 and aspartate 10 together coordinate Mg(2+). Lysine 146 lines the substrate pocket. Mg(2+) is bound by residues aspartate 169 and aspartate 173.

This sequence belongs to the archaeal SPP-like hydrolase family. Requires Mg(2+) as cofactor.

The catalysed reaction is 2-phosphoglycolate + H2O = glycolate + phosphate. Its function is as follows. Catalyzes the dephosphorylation of 2-phosphoglycolate. This chain is Phosphoglycolate phosphatase, found in Methanothrix thermoacetophila (strain DSM 6194 / JCM 14653 / NBRC 101360 / PT) (Methanosaeta thermophila).